Reading from the N-terminus, the 479-residue chain is Serralysin C (479 aa).

Residues 1–17 constitute a propeptide that is removed on maturation; that stretch reads MGKNLSLRQDDAQHALS. Histidine 188 is a Zn(2+) binding site. Glutamate 189 is a catalytic residue. Residues histidine 192 and tyrosine 228 each contribute to the Zn(2+) site. The Ca(2+) site is built by arginine 265, glycine 267, aspartate 297, glycine 299, glycine 300, aspartate 302, threonine 339, glutamate 341, glycine 346, glycine 348, aspartate 350, asparagine 355, alanine 357, asparagine 359, glycine 363, glycine 364, alanine 365, glycine 366, aspartate 368, glycine 372, glycine 373, glycine 375, aspartate 377, glycine 381, glycine 382, alanine 383, glycine 384, aspartate 386, aspartate 395, aspartate 402, and aspartate 412. Hemolysin-type calcium-binding repeat units follow at residues 344 to 361, 362 to 379, and 380 to 397; these read IGGS…DNIL, QGGA…ADTL, and YGGA…QDST.

It belongs to the peptidase M10B family. Ca(2+) serves as cofactor. The cofactor is Zn(2+).

Its subcellular location is the secreted. The catalysed reaction is Preferential cleavage of bonds with hydrophobic residues in P1'.. The polypeptide is Serralysin C (prtC) (Dickeya chrysanthemi (Pectobacterium chrysanthemi)).